The chain runs to 232 residues: Phosphatidylserine decarboxylase proenzyme (232 aa).

Residue Ser190 is the Schiff-base intermediate with substrate; via pyruvic acid of the active site. Position 190 is a pyruvic acid (Ser); by autocatalysis (Ser190).

Belongs to the phosphatidylserine decarboxylase family. PSD-A subfamily. As to quaternary structure, heterodimer of a large membrane-associated beta subunit and a small pyruvoyl-containing alpha subunit. It depends on pyruvate as a cofactor. Is synthesized initially as an inactive proenzyme. Formation of the active enzyme involves a self-maturation process in which the active site pyruvoyl group is generated from an internal serine residue via an autocatalytic post-translational modification. Two non-identical subunits are generated from the proenzyme in this reaction, and the pyruvate is formed at the N-terminus of the alpha chain, which is derived from the carboxyl end of the proenzyme. The post-translation cleavage follows an unusual pathway, termed non-hydrolytic serinolysis, in which the side chain hydroxyl group of the serine supplies its oxygen atom to form the C-terminus of the beta chain, while the remainder of the serine residue undergoes an oxidative deamination to produce ammonia and the pyruvoyl prosthetic group on the alpha chain.

The protein resides in the cell membrane. The catalysed reaction is a 1,2-diacyl-sn-glycero-3-phospho-L-serine + H(+) = a 1,2-diacyl-sn-glycero-3-phosphoethanolamine + CO2. It participates in phospholipid metabolism; phosphatidylethanolamine biosynthesis; phosphatidylethanolamine from CDP-diacylglycerol: step 2/2. Functionally, catalyzes the formation of phosphatidylethanolamine (PtdEtn) from phosphatidylserine (PtdSer). The sequence is that of Phosphatidylserine decarboxylase proenzyme from Afipia carboxidovorans (strain ATCC 49405 / DSM 1227 / KCTC 32145 / OM5) (Oligotropha carboxidovorans).